Consider the following 378-residue polypeptide: Alanine dehydrogenase (378 aa).

Positions 15 and 74 each coordinate substrate. The active-site Proton donor/acceptor is His-95. NAD(+) is bound by residues Ser-132, 176–177 (VV), Asp-196, Ser-218, 237–238 (VL), 265–268 (VAID), and 297–300 (VANM). The active-site Proton donor/acceptor is the Asp-268.

The protein belongs to the AlaDH/PNT family. As to quaternary structure, homohexamer. Trimer of dimer.

The protein localises to the cytoplasm. The enzyme catalyses L-alanine + NAD(+) + H2O = pyruvate + NH4(+) + NADH + H(+). It functions in the pathway amino-acid degradation; L-alanine degradation via dehydrogenase pathway; NH(3) and pyruvate from L-alanine: step 1/1. Catalyzes the reversible oxidative deamination of L-alanine to pyruvate. Oxidative deamination proceeds through a sequential, ordered ternary-binary mechanism, where NAD(+) binds first followed by L-alanine; the products are released in the order ammonia, pyruvate and NADH. Disruption blocks sporulation probably in stage V; 20-30% sporulation can be restored if the media is supplemented with pyruvate, suggesting lack of pyruvate blocks sporulation. Thus it is a key factor in the assimilation of L-alanine as an energy source via the tricarboxylic acid cycle during sporulation. The protein is Alanine dehydrogenase of Bacillus subtilis (strain 168).